The sequence spans 221 residues: Uracil-DNA glycosylase (221 aa).

The active-site Proton acceptor is Asp-65.

It belongs to the uracil-DNA glycosylase (UDG) superfamily. UNG family.

It localises to the cytoplasm. The enzyme catalyses Hydrolyzes single-stranded DNA or mismatched double-stranded DNA and polynucleotides, releasing free uracil.. In terms of biological role, excises uracil residues from the DNA which can arise as a result of misincorporation of dUMP residues by DNA polymerase or due to deamination of cytosine. The sequence is that of Uracil-DNA glycosylase from Christiangramia forsetii (strain DSM 17595 / CGMCC 1.15422 / KT0803) (Gramella forsetii).